Reading from the N-terminus, the 387-residue chain is Large ribosomal subunit protein uL3 (387 aa).

The protein belongs to the universal ribosomal protein uL3 family.

The protein resides in the cytoplasm. This chain is Large ribosomal subunit protein uL3 (RPL3), found in Candida glabrata (strain ATCC 2001 / BCRC 20586 / JCM 3761 / NBRC 0622 / NRRL Y-65 / CBS 138) (Yeast).